Here is a 228-residue protein sequence, read N- to C-terminus: Superoxide dismutase [Mn], mitochondrial (228 aa).

Residues 1-24 (MALRTLVSRRTLATGLGFRQQLRG) constitute a mitochondrion transit peptide. Mn(2+) contacts are provided by histidine 52, histidine 100, aspartate 189, and histidine 193.

Belongs to the iron/manganese superoxide dismutase family. As to quaternary structure, homotetramer. Requires Mn(2+) as cofactor.

The protein resides in the mitochondrion matrix. It catalyses the reaction 2 superoxide + 2 H(+) = H2O2 + O2. In terms of biological role, destroys superoxide anion radicals which are normally produced within the cells and which are toxic to biological systems. The polypeptide is Superoxide dismutase [Mn], mitochondrial (SODA) (Nicotiana plumbaginifolia (Leadwort-leaved tobacco)).